The chain runs to 101 residues: Small ribosomal subunit protein uS14 (101 aa).

A compositionally biased stretch (basic and acidic residues) spans 1–10 (MAKKSAIEKN). The disordered stretch occupies residues 1 to 23 (MAKKSAIEKNNRRKKMTKNAAPK). Over residues 11–23 (NRRKKMTKNAAPK) the composition is skewed to basic residues.

Part of the 30S ribosomal subunit. Contacts proteins S3 and S10.

Its function is as follows. Binds 16S rRNA, required for the assembly of 30S particles and may also be responsible for determining the conformation of the 16S rRNA at the A site. This is Small ribosomal subunit protein uS14 from Rhodopseudomonas palustris (strain ATCC BAA-98 / CGA009).